The chain runs to 221 residues: Orotate phosphoribosyltransferase (221 aa).

K26 serves as a coordination point for 5-phospho-alpha-D-ribose 1-diphosphate. 34 to 35 (FF) contacts orotate. 5-phospho-alpha-D-ribose 1-diphosphate is bound by residues 72–73 (YK), R98, K99, K102, H104, and 123–131 (DDVISAGTS). The orotate site is built by S127 and R155.

Belongs to the purine/pyrimidine phosphoribosyltransferase family. PyrE subfamily. As to quaternary structure, homodimer. Requires Mg(2+) as cofactor.

It carries out the reaction orotidine 5'-phosphate + diphosphate = orotate + 5-phospho-alpha-D-ribose 1-diphosphate. The protein operates within pyrimidine metabolism; UMP biosynthesis via de novo pathway; UMP from orotate: step 1/2. In terms of biological role, catalyzes the transfer of a ribosyl phosphate group from 5-phosphoribose 1-diphosphate to orotate, leading to the formation of orotidine monophosphate (OMP). In Janthinobacterium sp. (strain Marseille) (Minibacterium massiliensis), this protein is Orotate phosphoribosyltransferase.